The chain runs to 463 residues: L-seryl-tRNA(Sec) selenium transferase (463 aa).

Lysine 295 is subject to N6-(pyridoxal phosphate)lysine.

The protein belongs to the SelA family. As to quaternary structure, homodecamer; pentamer of dimers. Binds only one seryl-tRNA(Sec) per dimer. Pyridoxal 5'-phosphate is required as a cofactor.

It localises to the cytoplasm. It carries out the reaction L-seryl-tRNA(Sec) + selenophosphate + H(+) = L-selenocysteinyl-tRNA(Sec) + phosphate. The protein operates within aminoacyl-tRNA biosynthesis; selenocysteinyl-tRNA(Sec) biosynthesis; selenocysteinyl-tRNA(Sec) from L-seryl-tRNA(Sec) (bacterial route): step 1/1. Its function is as follows. Converts seryl-tRNA(Sec) to selenocysteinyl-tRNA(Sec) required for selenoprotein biosynthesis. This is L-seryl-tRNA(Sec) selenium transferase from Escherichia coli (strain 55989 / EAEC).